Consider the following 442-residue polypeptide: Probable folate-biopterin transporter 7 (442 aa).

A run of 12 helical transmembrane segments spans residues L23–F43, L64–F82, I87–L107, I114–A134, F158–I178, Q184–I204, I241–Y261, A270–A290, K302–V322, V335–F355, I379–V399, and G410–D430.

Belongs to the major facilitator superfamily. Folate-biopterin transporter (TC 2.A.71) family.

It is found in the membrane. Could mediate folate transport. In Arabidopsis thaliana (Mouse-ear cress), this protein is Probable folate-biopterin transporter 7.